The primary structure comprises 403 residues: MGLRNLLDKVEHHFEKGGRYEKWYPLYEAVDTFLYRPGSVTRTTAHVRDGIDLKRMMIIVWLCTFPAMFFGMYNVGHQANLIFAQSPDLLSAQDGWRFALIGALAGFDPNSLWDCLVQGAAYFLPVYLTTFIVGGFWEVLFASIRRHEVNEGFFVTSVLFALTLPPSVPLWQVALGISFGVVLGKEVFGGTGKNFLNPALVGRAFLFFAYPAQMSGDAVWTSVDGFAGATSLSLAAAGGVDNILGHGLTWMDAFLGHMQGSMGETSTLAIFIGGAVLLLTRIASWRIVAGVMLGMVAMSYLFNAIGSASNPMFAMPWYWHLVTGGFAFGMIFMATDPVSASMTDTGKWLFGALIGVMVMLIRVVNPAFPEGMMLAILFANLFAPLIDHFVVQANIKRRLARNG.

Transmembrane regions (helical) follow at residues 56 to 76 (MMII…YNVG), 121 to 141 (AYFL…EVLF), 164 to 184 (LPPS…VVLG), 225 to 245 (GFAG…NILG), 260 to 280 (GSMG…LLLT), 287 to 307 (IVAG…AIGS), 312 to 332 (MFAM…GMIF), 348 to 368 (WLFG…NPAF), and 371 to 391 (GMML…HFVV). Threonine 230 carries the post-translational modification FMN phosphoryl threonine.

This sequence belongs to the NqrB/RnfD family. In terms of assembly, composed of six subunits; NqrA, NqrB, NqrC, NqrD, NqrE and NqrF. The cofactor is FMN.

It localises to the cell inner membrane. The enzyme catalyses a ubiquinone + n Na(+)(in) + NADH + H(+) = a ubiquinol + n Na(+)(out) + NAD(+). Functionally, NQR complex catalyzes the reduction of ubiquinone-1 to ubiquinol by two successive reactions, coupled with the transport of Na(+) ions from the cytoplasm to the periplasm. NqrA to NqrE are probably involved in the second step, the conversion of ubisemiquinone to ubiquinol. The chain is Na(+)-translocating NADH-quinone reductase subunit B from Pseudomonas aeruginosa (strain LESB58).